The sequence spans 1229 residues: Nuclear envelope pore membrane protein POM 121C (1229 aa).

Low complexity predominate over residues methionine 1–alanine 10. The segment at methionine 1 to arginine 24 is disordered. A cisternal side region spans residues methionine 1–serine 40. A required for targeting to the nucleus and nuclear pore complex region spans residues methionine 1 to arginine 398. Basic and acidic residues predominate over residues glycine 11–arginine 24. A helical transmembrane segment spans residues leucine 41 to glycine 61. The pore side stretch occupies residues threonine 62 to lysine 1229. Phosphoserine is present on serine 81. 5 disordered regions span residues arginine 90–arginine 200, lysine 296–serine 507, lysine 579–threonine 747, proline 936–proline 966, and proline 1202–lysine 1229. A compositionally biased stretch (pro residues) spans alanine 155–glutamine 166. Positions proline 176 to proline 189 are enriched in low complexity. Phosphoserine is present on residues serine 322, serine 328, serine 348, serine 370, and serine 373. Residues leucine 374–isoleucine 400 show a composition bias toward polar residues. Residues proline 409 to serine 422 are compositionally biased toward low complexity. Composition is skewed to basic and acidic residues over residues arginine 427 to histidine 439 and alanine 449 to proline 463. Residues asparagine 468–glycine 479 are compositionally biased toward polar residues. Over residues proline 612–serine 629 the composition is skewed to low complexity. Polar residues predominate over residues glutamine 660–proline 673. Composition is skewed to low complexity over residues serine 689–proline 703 and serine 726–threonine 747. Residues leucine 1219–lysine 1229 show a composition bias toward basic residues.

The protein belongs to the POM121 family.

It is found in the nucleus. The protein resides in the nuclear pore complex. It localises to the nucleus membrane. Its subcellular location is the endoplasmic reticulum membrane. Its function is as follows. Essential component of the nuclear pore complex (NPC). The repeat-containing domain may be involved in anchoring components of the pore complex to the pore membrane. When overexpressed in cells induces the formation of cytoplasmic annulate lamellae (AL). This chain is Nuclear envelope pore membrane protein POM 121C (POM121C), found in Homo sapiens (Human).